The primary structure comprises 273 residues: Hydroxyethylthiazole kinase 2 (273 aa).

Met45 is a binding site for substrate. 2 residues coordinate ATP: Lys120 and Thr173. Gly200 provides a ligand contact to substrate.

The protein belongs to the Thz kinase family. The cofactor is Mg(2+).

The catalysed reaction is 5-(2-hydroxyethyl)-4-methylthiazole + ATP = 4-methyl-5-(2-phosphooxyethyl)-thiazole + ADP + H(+). The protein operates within cofactor biosynthesis; thiamine diphosphate biosynthesis; 4-methyl-5-(2-phosphoethyl)-thiazole from 5-(2-hydroxyethyl)-4-methylthiazole: step 1/1. Its function is as follows. Catalyzes the phosphorylation of the hydroxyl group of 4-methyl-5-beta-hydroxyethylthiazole (THZ). The protein is Hydroxyethylthiazole kinase 2 of Leuconostoc mesenteroides subsp. mesenteroides (strain ATCC 8293 / DSM 20343 / BCRC 11652 / CCM 1803 / JCM 6124 / NCDO 523 / NBRC 100496 / NCIMB 8023 / NCTC 12954 / NRRL B-1118 / 37Y).